Here is a 120-residue protein sequence, read N- to C-terminus: UPF0102 protein CbuK_0265 (120 aa).

Belongs to the UPF0102 family.

The sequence is that of UPF0102 protein CbuK_0265 from Coxiella burnetii (strain CbuK_Q154) (Coxiella burnetii (strain Q154)).